Here is a 350-residue protein sequence, read N- to C-terminus: tRNA-splicing endonuclease (350 aa).

Catalysis depends on residues Tyr286, His297, and Lys328.

This sequence belongs to the tRNA-intron endonuclease family. Archaeal long subfamily. In terms of assembly, homodimer.

It catalyses the reaction pretRNA = a 3'-half-tRNA molecule with a 5'-OH end + a 5'-half-tRNA molecule with a 2',3'-cyclic phosphate end + an intron with a 2',3'-cyclic phosphate and a 5'-hydroxyl terminus.. In terms of biological role, endonuclease that removes tRNA introns. Cleaves pre-tRNA at the 5'- and 3'-splice sites to release the intron. The products are an intron and two tRNA half-molecules bearing 2',3' cyclic phosphate and 5'-OH termini. Recognizes a pseudosymmetric substrate in which 2 bulged loops of 3 bases are separated by a stem of 4 bp. The chain is tRNA-splicing endonuclease from Methanosarcina barkeri (strain Fusaro / DSM 804).